A 305-amino-acid chain; its full sequence is tRNA dimethylallyltransferase (305 aa).

11–18 contributes to the ATP binding site; the sequence is GPTAVGKT. 13-18 serves as a coordination point for substrate; that stretch reads TAVGKT. Positions 36–39 are interaction with substrate tRNA; that stretch reads DSMQ.

It belongs to the IPP transferase family. As to quaternary structure, monomer. The cofactor is Mg(2+).

The catalysed reaction is adenosine(37) in tRNA + dimethylallyl diphosphate = N(6)-dimethylallyladenosine(37) in tRNA + diphosphate. Functionally, catalyzes the transfer of a dimethylallyl group onto the adenine at position 37 in tRNAs that read codons beginning with uridine, leading to the formation of N6-(dimethylallyl)adenosine (i(6)A). The sequence is that of tRNA dimethylallyltransferase from Listeria innocua serovar 6a (strain ATCC BAA-680 / CLIP 11262).